Consider the following 202-residue polypeptide: Diadenylate cyclase (202 aa).

A helical membrane pass occupies residues 6 to 26; that stretch reads VFSVIILVLLFLILALTLLFV. Residues 29–185 enclose the DAC domain; that stretch reads NKRTRSFVIR…RGVIKTLSSN (157 aa).

The protein belongs to the adenylate cyclase family. DacB/CdaS subfamily. Probably oligomerizes.

Its subcellular location is the cell membrane. The catalysed reaction is 2 ATP = 3',3'-c-di-AMP + 2 diphosphate. Its function is as follows. Catalyzes the condensation of 2 ATP molecules into cyclic di-AMP (c-di-AMP), a second messenger used to regulate differing processes in different bacteria. This Mycoplasma pneumoniae (strain ATCC 29342 / M129 / Subtype 1) (Mycoplasmoides pneumoniae) protein is Diadenylate cyclase.